Reading from the N-terminus, the 97-residue chain is Aspartyl/glutamyl-tRNA(Asn/Gln) amidotransferase subunit C (97 aa).

Residues 59-78 (STGKLRPDEPAQPLSRDDAL) form a disordered region. Residues 63–78 (LRPDEPAQPLSRDDAL) are compositionally biased toward basic and acidic residues.

The protein belongs to the GatC family. In terms of assembly, heterotrimer of A, B and C subunits.

The enzyme catalyses L-glutamyl-tRNA(Gln) + L-glutamine + ATP + H2O = L-glutaminyl-tRNA(Gln) + L-glutamate + ADP + phosphate + H(+). It catalyses the reaction L-aspartyl-tRNA(Asn) + L-glutamine + ATP + H2O = L-asparaginyl-tRNA(Asn) + L-glutamate + ADP + phosphate + 2 H(+). Its function is as follows. Allows the formation of correctly charged Asn-tRNA(Asn) or Gln-tRNA(Gln) through the transamidation of misacylated Asp-tRNA(Asn) or Glu-tRNA(Gln) in organisms which lack either or both of asparaginyl-tRNA or glutaminyl-tRNA synthetases. The reaction takes place in the presence of glutamine and ATP through an activated phospho-Asp-tRNA(Asn) or phospho-Glu-tRNA(Gln). This Metallosphaera sedula (strain ATCC 51363 / DSM 5348 / JCM 9185 / NBRC 15509 / TH2) protein is Aspartyl/glutamyl-tRNA(Asn/Gln) amidotransferase subunit C.